A 1218-amino-acid chain; its full sequence is Probable RNA-dependent RNA polymerase SHL2 (1218 aa).

The protein belongs to the RdRP family.

The enzyme catalyses RNA(n) + a ribonucleoside 5'-triphosphate = RNA(n+1) + diphosphate. In terms of biological role, involved in the RNA silencing pathway. Probably required for the generation of small interfering RNAs (siRNAs). Regulates shoot apical meristem (SAM) initiation and maintenance and leaf polarization through the trans-acting siRNAS (ta-siRNAs) pathway which probably modulates the expression of the ARF2, ARF3, ARF4, ARF14 and ARF15 genes. This Oryza sativa subsp. japonica (Rice) protein is Probable RNA-dependent RNA polymerase SHL2 (SHL2).